The following is a 262-amino-acid chain: Snake venom serine proteinase 1 (262 aa).

An N-terminal signal peptide occupies residues 1–18 (MVLIRVLANLLILQLSYA). The propeptide occupies 19–24 (QKSSEL). Positions 25–253 (VIGGDECNIN…HLDWIQSIIA (229 aa)) constitute a Peptidase S1 domain. Intrachain disulfides connect Cys31–Cys165, Cys52–Cys68, Cys144–Cys214, Cys176–Cys193, and Cys204–Cys229. The active-site Charge relay system is the His67. N-linked (GlcNAc...) asparagine glycosylation is present at Asn105. Asp112 serves as the catalytic Charge relay system. Residue Ser208 is the Charge relay system of the active site.

It belongs to the peptidase S1 family. Snake venom subfamily. Monomer. Expressed by the venom gland.

It is found in the secreted. Its function is as follows. Snake venom serine protease that may act in the hemostasis system of the prey. The sequence is that of Snake venom serine proteinase 1 from Crotalus adamanteus (Eastern diamondback rattlesnake).